A 323-amino-acid polypeptide reads, in one-letter code: Sphingolipid delta(4)-desaturase/C4-monooxygenase DES2 (323 aa).

Gly2 carries the N-myristoyl glycine lipid modification. 2 helical membrane-spanning segments follow: residues 45-65 (WTVTAMVLAQLLACWLAQGLA) and 68-88 (WLFFWAYAFGGCVNHSLTLAI). The short motif at 89–93 (HDISH) is the Histidine box-1 element. Positions 95–99 (TAFGT) are required for C4-hydroxylase activity. The Histidine box-2 motif lies at 128-132 (HVDHH). Residues 209–231 (MVYLLASSLLGLGLHPISGHFVA) form a helical membrane-spanning segment. Residues 259-263 (HMEHH) carry the Histidine box-3 motif.

Belongs to the fatty acid desaturase type 1 family. DEGS subfamily.

Its subcellular location is the endoplasmic reticulum membrane. It catalyses the reaction a dihydroceramide + 2 Fe(II)-[cytochrome b5] + O2 + 2 H(+) = a phytoceramide + 2 Fe(III)-[cytochrome b5] + H2O. It carries out the reaction an N-acylsphinganine + 2 Fe(II)-[cytochrome b5] + O2 + 2 H(+) = an N-acylsphing-4-enine + 2 Fe(III)-[cytochrome b5] + 2 H2O. The catalysed reaction is N-octanoylsphinganine + 2 Fe(II)-[cytochrome b5] + O2 + 2 H(+) = N-octanoyl-4-hydroxysphinganine + 2 Fe(III)-[cytochrome b5] + H2O. The enzyme catalyses an N-acylsphinganine + 2 Fe(II)-[cytochrome b5] + O2 + 2 H(+) = an N-acyl-(4R)-4-hydroxysphinganine + 2 Fe(III)-[cytochrome b5] + H2O. It participates in membrane lipid metabolism; sphingolipid biosynthesis. In terms of biological role, bifunctional enzyme which acts both as a sphingolipid delta(4)-desaturase and a sphingolipid C4-monooxygenase. The sequence is that of Sphingolipid delta(4)-desaturase/C4-monooxygenase DES2 from Bos taurus (Bovine).